Here is a 148-residue protein sequence, read N- to C-terminus: Homoprotocatechuate degradative operon repressor (148 aa).

Residues 2 to 134 (HDSLTIALLQ…LTHLLEEFIA (133 aa)) form the HTH marR-type domain.

Its function is as follows. Repressor for the homoprotocatechuate catabolic pathway hpc operon. This chain is Homoprotocatechuate degradative operon repressor (hpcR), found in Escherichia coli.